The chain runs to 175 residues: Large ribosomal subunit protein bL9 (175 aa).

This sequence belongs to the bacterial ribosomal protein bL9 family.

Its function is as follows. Binds to the 23S rRNA. This is Large ribosomal subunit protein bL9 from Orientia tsutsugamushi (strain Boryong) (Rickettsia tsutsugamushi).